Here is a 454-residue protein sequence, read N- to C-terminus: Pup--protein ligase (454 aa).

Glu9 contributes to the Mg(2+) binding site. An ATP-binding site is contributed by Arg53. Residue Tyr55 coordinates Mg(2+). Asp57 functions as the Proton acceptor in the catalytic mechanism. Glu63 lines the Mg(2+) pocket. ATP contacts are provided by Thr66 and Trp421.

It belongs to the Pup ligase/Pup deamidase family. Pup-conjugating enzyme subfamily.

The enzyme catalyses ATP + [prokaryotic ubiquitin-like protein]-L-glutamate + [protein]-L-lysine = ADP + phosphate + N(6)-([prokaryotic ubiquitin-like protein]-gamma-L-glutamyl)-[protein]-L-lysine.. Its pathway is protein degradation; proteasomal Pup-dependent pathway. It functions in the pathway protein modification; protein pupylation. Its function is as follows. Catalyzes the covalent attachment of the prokaryotic ubiquitin-like protein modifier Pup to the proteasomal substrate proteins, thereby targeting them for proteasomal degradation. This tagging system is termed pupylation. The ligation reaction involves the side-chain carboxylate of the C-terminal glutamate of Pup and the side-chain amino group of a substrate lysine. This is Pup--protein ligase from Frankia casuarinae (strain DSM 45818 / CECT 9043 / HFP020203 / CcI3).